The primary structure comprises 1531 residues: Lysophospholipase nte1 (1531 aa).

The Cytoplasmic segment spans residues 1–72 (MATGDGIIAA…TPPAPSTMVG (72 aa)). A helical membrane pass occupies residues 73–93 (WIGWIFSFIFQVIPSVLYWIV). Over 94 to 115 (TFTTITLPTWLFTLFSMSLTFT) the chain is Lumenal. Residues 116–136 (MNFTTLLLIALAVVSTISWFI) traverse the membrane as a helical segment. The Cytoplasmic segment spans residues 137–1531 (RYRFLNMYSR…RTLAPRRASI (1395 aa)). Disordered regions lie at residues 242–265 (GSDEELNRMAGESSDEDDHRPDGR), 303–385 (ASSA…TRRK), and 766–789 (NTSSSRVSGSAAAANDPRRKKQSR). Basic and acidic residues predominate over residues 325-343 (REMDDSPHVYQGDRLDPAS). Residues 689-809 (GGTS…AVAS) and 849-969 (RLTS…IAQR) contribute to the a nucleoside 3',5'-cyclic phosphate site. The segment covering 768–779 (SSSRVSGSAAAA) has biased composition (low complexity). The 165-residue stretch at 1228-1392 (LVLGGGGARG…IDNLTVDHMK (165 aa)) folds into the PNPLA domain. The short motif at 1232–1237 (GGGARG) is the GXGXXG element. Positions 1259-1263 (GTSIG) match the GXSXG motif. Ser-1261 acts as the Nucleophile in catalysis. Asp-1379 serves as the catalytic Proton acceptor. Positions 1379–1381 (DGG) match the DGA/G motif. The interval 1510-1531 (LPEETEEKKKLQRTLAPRRASI) is disordered.

It belongs to the NTE family.

It localises to the endoplasmic reticulum membrane. The enzyme catalyses a 1-acyl-sn-glycero-3-phosphocholine + H2O = sn-glycerol 3-phosphocholine + a fatty acid + H(+). With respect to regulation, inhibited by organophosphorus esters. Its function is as follows. Intracellular phospholipase B that catalyzes the double deacylation of phosphatidylcholine (PC) to glycerophosphocholine (GroPCho). Plays an important role in membrane lipid homeostasis. Responsible for the rapid PC turnover in response to inositol, elevated temperatures, or when choline is present in the growth medium. This Aspergillus niger (strain ATCC MYA-4892 / CBS 513.88 / FGSC A1513) protein is Lysophospholipase nte1 (nte1).